Here is a 424-residue protein sequence, read N- to C-terminus: Gamma-glutamyl phosphate reductase (424 aa).

This sequence belongs to the gamma-glutamyl phosphate reductase family.

The protein localises to the cytoplasm. The enzyme catalyses L-glutamate 5-semialdehyde + phosphate + NADP(+) = L-glutamyl 5-phosphate + NADPH + H(+). Its pathway is amino-acid biosynthesis; L-proline biosynthesis; L-glutamate 5-semialdehyde from L-glutamate: step 2/2. Functionally, catalyzes the NADPH-dependent reduction of L-glutamate 5-phosphate into L-glutamate 5-semialdehyde and phosphate. The product spontaneously undergoes cyclization to form 1-pyrroline-5-carboxylate. The protein is Gamma-glutamyl phosphate reductase of Dehalococcoides mccartyi (strain CBDB1).